The following is a 119-amino-acid chain: Basic phospholipase A2 notechis II-5 (119 aa).

7 cysteine pairs are disulfide-bonded: Cys-11–Cys-71, Cys-27–Cys-118, Cys-29–Cys-45, Cys-44–Cys-99, Cys-51–Cys-92, Cys-60–Cys-85, and Cys-78–Cys-90. Ca(2+) is bound by residues Tyr-28, Gly-30, and Gly-32. His-48 is a catalytic residue. A Ca(2+)-binding site is contributed by Asp-49. Residue Asp-93 is part of the active site.

This sequence belongs to the phospholipase A2 family. Group I subfamily. D49 sub-subfamily. The cofactor is Ca(2+). As to expression, expressed by the venom gland.

The protein localises to the secreted. It carries out the reaction a 1,2-diacyl-sn-glycero-3-phosphocholine + H2O = a 1-acyl-sn-glycero-3-phosphocholine + a fatty acid + H(+). Functionally, snake venom phospholipase A2 (PLA2) that inhibits neuromuscular transmission by blocking acetylcholine release from the nerve termini. Notechis II-5 is less toxic than notexin but has a higher specific phospholipase activity. PLA2 catalyzes the calcium-dependent hydrolysis of the 2-acyl groups in 3-sn-phosphoglycerides. In Notechis scutatus scutatus (Mainland tiger snake), this protein is Basic phospholipase A2 notechis II-5.